The primary structure comprises 343 residues: Heat-inducible transcription repressor HrcA (343 aa).

Belongs to the HrcA family.

Negative regulator of class I heat shock genes (grpE-dnaK-dnaJ and groELS operons). Prevents heat-shock induction of these operons. This chain is Heat-inducible transcription repressor HrcA, found in Caldanaerobacter subterraneus subsp. tengcongensis (strain DSM 15242 / JCM 11007 / NBRC 100824 / MB4) (Thermoanaerobacter tengcongensis).